Consider the following 531-residue polypeptide: Sop-2-related protein 3 (531 aa).

As to expression, expressed ubiquitously.

Its subcellular location is the cytoplasm. The protein resides in the nucleus. Functionally, probably acts synergistically with sop-2 to maintain the transcriptionally repressive state of homeotic genes in order to regulate various neurogenic identities. Specification of some neuronal identities also involves expression of non-Hox genes. Specifies dopaminergic and serotonergic neuronal cell fate, and regulates neurotransmitter choice and axon pathfinding. This Caenorhabditis elegans protein is Sop-2-related protein 3 (sor-3).